We begin with the raw amino-acid sequence, 198 residues long: CXXC-type zinc finger protein 4 (198 aa).

A disordered region spans residues 114–134; the sequence is NHSSSSSSSSGGAGGANPAKK. The segment at 132–173 adopts a CXXC-type zinc-finger fold; that stretch reads AKKKRKRCGVCVPCKRLINCGVCSSCRNRKTGHQICKFRKCE. Cysteine 139, cysteine 142, cysteine 145, cysteine 151, cysteine 154, and cysteine 157 together coordinate Zn(2+). Residues 161–166 are interaction with DVL1; it reads KTGHQI. 2 residues coordinate Zn(2+): cysteine 167 and cysteine 172.

As to quaternary structure, interacts with the PDZ domain of DVL1.

It localises to the cytoplasm. Functionally, acts as a negative regulator of the Wnt signaling pathway via its interaction with DVL1. Binds preferentially to DNA containing cytidine-phosphate-guanosine (CpG) dinucleotides over CpH (H=A, T, and C), hemimethylated-CpG and hemimethylated-hydroxymethyl-CpG. The chain is CXXC-type zinc finger protein 4 (CXXC4) from Homo sapiens (Human).